Here is a 415-residue protein sequence, read N- to C-terminus: tRNA(Ile2) 2-agmatinylcytidine synthetase TiaS (415 aa).

This sequence belongs to the TiaS family.

It is found in the cytoplasm. It catalyses the reaction cytidine(34) in tRNA(Ile2) + agmatine + ATP + H2O = 2-agmatinylcytidine(34) in tRNA(Ile2) + AMP + 2 phosphate + 2 H(+). ATP-dependent agmatine transferase that catalyzes the formation of 2-agmatinylcytidine (agm2C) at the wobble position (C34) of tRNA(Ile2), converting the codon specificity from AUG to AUA. This chain is tRNA(Ile2) 2-agmatinylcytidine synthetase TiaS, found in Pyrobaculum neutrophilum (strain DSM 2338 / JCM 9278 / NBRC 100436 / V24Sta) (Thermoproteus neutrophilus).